Consider the following 175-residue polypeptide: Pre-mRNA-splicing factor SNT309 (175 aa).

As to quaternary structure, belongs to the NTC complex (or PRP19-associated complex), composed of at least CEF1, CLF1, ISY1, NTC20, SNT309, SYF1, SYF2, and PRP19. The NTC complex associates with the spliceosome after the release of the U1 and U4 snRNAs and forms the CWC spliceosome subcomplex (or CEF1-associated complex) reminiscent of a late-stage spliceosome composed also of the U2, U5 and U6 snRNAs and at least BUD13, BUD31, BRR2, CDC40, CUS1, CWC2, CWC15, CWC21, CWC22, CWC23, CWC24, CWC25, CWC27, ECM2, HSH155, IST3, LEA1, MSL1, PRP8, PRP9, PRP11, PRP21, PRP22, PRP45, PRP46, SLU7, SMB1, SMD1, SMD2, SMD3, SMX2, SMX3, SNU114, SPP2, RSE1 and YJU2. Interacts with PRP19.

It is found in the nucleus. Functionally, involved in pre-mRNA splicing by stabilizing the NTC (or PRP19-associated complex). As a component of the NTC complex, associates to the spliceosome to mediate conformational rearrangement or to stabilize the structure of the spliceosome after U4 snRNA dissociation, which leads to spliceosome maturation. This Saccharomyces cerevisiae (strain ATCC 204508 / S288c) (Baker's yeast) protein is Pre-mRNA-splicing factor SNT309 (SNT309).